The sequence spans 245 residues: 1-(5-phosphoribosyl)-5-[(5-phosphoribosylamino)methylideneamino] imidazole-4-carboxamide isomerase 1 (245 aa).

D7 functions as the Proton acceptor in the catalytic mechanism. The active-site Proton donor is the D129.

This sequence belongs to the HisA/HisF family.

The protein localises to the cytoplasm. The enzyme catalyses 1-(5-phospho-beta-D-ribosyl)-5-[(5-phospho-beta-D-ribosylamino)methylideneamino]imidazole-4-carboxamide = 5-[(5-phospho-1-deoxy-D-ribulos-1-ylimino)methylamino]-1-(5-phospho-beta-D-ribosyl)imidazole-4-carboxamide. It participates in amino-acid biosynthesis; L-histidine biosynthesis; L-histidine from 5-phospho-alpha-D-ribose 1-diphosphate: step 4/9. This is 1-(5-phosphoribosyl)-5-[(5-phosphoribosylamino)methylideneamino] imidazole-4-carboxamide isomerase 1 (hisA1) from Photorhabdus laumondii subsp. laumondii (strain DSM 15139 / CIP 105565 / TT01) (Photorhabdus luminescens subsp. laumondii).